The following is a 379-amino-acid chain: Probable pectin lyase A (379 aa).

The N-terminal stretch at 1-20 (MKYSTIFSAAAAVFAGSAAA) is a signal peptide. Disulfide bonds link Cys-83-Cys-102 and Cys-92-Cys-226. N-linked (GlcNAc...) asparagine glycosylation occurs at Asn-129. Arg-256 is a catalytic residue. Cys-322 and Cys-330 form a disulfide bridge.

Belongs to the polysaccharide lyase 1 family.

The protein localises to the secreted. It carries out the reaction Eliminative cleavage of (1-&gt;4)-alpha-D-galacturonan methyl ester to give oligosaccharides with 4-deoxy-6-O-methyl-alpha-D-galact-4-enuronosyl groups at their non-reducing ends.. Pectinolytic enzymes consist of four classes of enzymes: pectin lyase, polygalacturonase, pectin methylesterase and rhamnogalacturonase. Among pectinolytic enzymes, pectin lyase is the most important in depolymerization of pectin, since it cleaves internal glycosidic bonds of highly methylated pectins. This Aspergillus niger (strain ATCC MYA-4892 / CBS 513.88 / FGSC A1513) protein is Probable pectin lyase A (pelA).